Here is a 96-residue protein sequence, read N- to C-terminus: Co-chaperonin GroES 2 (96 aa).

It belongs to the GroES chaperonin family. In terms of assembly, heptamer of 7 subunits arranged in a ring. Interacts with the chaperonin GroEL.

Its subcellular location is the cytoplasm. Its function is as follows. Together with the chaperonin GroEL, plays an essential role in assisting protein folding. The GroEL-GroES system forms a nano-cage that allows encapsulation of the non-native substrate proteins and provides a physical environment optimized to promote and accelerate protein folding. GroES binds to the apical surface of the GroEL ring, thereby capping the opening of the GroEL channel. The protein is Co-chaperonin GroES 2 of Vibrio vulnificus (strain CMCP6).